Reading from the N-terminus, the 588-residue chain is Zinc finger protein 599 (588 aa).

One can recognise a KRAB domain in the interval 9-80; that stretch reads VSFEDVVVTF…KRGLSQSTCA (72 aa). 14 C2H2-type zinc fingers span residues 199–221, 227–249, 255–277, 283–305, 311–333, 339–361, 367–389, 395–417, 423–445, 451–473, 479–501, 507–529, 535–557, and 563–585; these read YTCT…QQIH, YECN…MRLH, YKCI…QRIH, YECK…NMTH, FLCK…MRIH, YECG…NVTH, YECG…KRTH, FECK…MRIH, YECS…NRTH, LECK…MRIH, YVCR…NRIH, FECK…MRTH, and FECN…RKIH.

This sequence belongs to the krueppel C2H2-type zinc-finger protein family.

Its subcellular location is the nucleus. Functionally, may be involved in transcriptional regulation. This chain is Zinc finger protein 599 (ZNF599), found in Homo sapiens (Human).